Consider the following 305-residue polypeptide: Translation initiation factor eIF2B subunit alpha (305 aa).

K35 carries the N6-acetyllysine modification.

It belongs to the eIF-2B alpha/beta/delta subunits family. In terms of assembly, component of the translation initiation factor 2B (eIF2B) complex which is a heterodecamer of two sets of five different subunits: alpha, beta, gamma, delta and epsilon. Subunits alpha, beta and delta comprise a regulatory subcomplex and subunits epsilon and gamma comprise a catalytic subcomplex. Within the complex, the hexameric regulatory complex resides at the center, with the two heterodimeric catalytic subcomplexes bound on opposite sides.

Its subcellular location is the cytoplasm. It localises to the cytosol. Activated by the chemical integrated stress response (ISR) inhibitor ISRIB which stimulates guanine nucleotide exchange factor activity for both phosphorylated and unphosphorylated eIF2. Acts as a component of the translation initiation factor 2B (eIF2B) complex, which catalyzes the exchange of GDP for GTP on eukaryotic initiation factor 2 (eIF2) gamma subunit. Its guanine nucleotide exchange factor activity is repressed when bound to eIF2 complex phosphorylated on the alpha subunit, thereby limiting the amount of methionyl-initiator methionine tRNA available to the ribosome and consequently global translation is repressed. In Pongo abelii (Sumatran orangutan), this protein is Translation initiation factor eIF2B subunit alpha (EIF2B1).